The primary structure comprises 474 residues: Cysteine--tRNA ligase (474 aa).

Residue C30 participates in Zn(2+) binding. The 'HIGH' region motif lies at 32–42 (PTVYNYAHIGN). Zn(2+) contacts are provided by C215, H240, and E244. The short motif at 272 to 276 (KMSKS) is the 'KMSKS' region element. Residue K275 coordinates ATP.

Belongs to the class-I aminoacyl-tRNA synthetase family. As to quaternary structure, monomer. The cofactor is Zn(2+).

It localises to the cytoplasm. It carries out the reaction tRNA(Cys) + L-cysteine + ATP = L-cysteinyl-tRNA(Cys) + AMP + diphosphate. The protein is Cysteine--tRNA ligase of Brachyspira hyodysenteriae (strain ATCC 49526 / WA1).